Reading from the N-terminus, the 112-residue chain is MAASAIKGLSALRSSTGRPIAFVRKIPWTAAASELREHFAQFGHVRRCTVPFDKETGFHRGMGWVQFSSQEELQNALQQEHHIIDGVKIHVQAQRAKALHGAQTSDEERFLR.

The residue at position 15 (Ser15) is a Phosphoserine. Residues 19 to 98 (PIAFVRKIPW…IHVQAQRAKA (80 aa)) enclose the RRM domain. Thr104 carries the post-translational modification Phosphothreonine. Position 105 is a phosphoserine (Ser105).

The protein localises to the mitochondrion. It localises to the nucleus. Its function is as follows. RNA-binding protein that acts as a nuclear receptor corepressor. Probably acts by binding the SRA RNA, and repressing the SRA-mediated nuclear receptor coactivation. Binds the STR7 loop of SRA RNA. Also able to repress glucocorticoid (GR), androgen (AR), thyroid (TR) and VDR-mediated transactivation. This Mus musculus (Mouse) protein is SRA stem-loop-interacting RNA-binding protein, mitochondrial (Slirp).